Here is a 363-residue protein sequence, read N- to C-terminus: Putative F-box protein At4g22170 (363 aa).

The F-box domain occupies 7 to 58 (PNSWSDLPHDLLNLVFERLSFANFNRARSVCSSWYSASRQSVPKNQIHWLIL).

The protein is Putative F-box protein At4g22170 of Arabidopsis thaliana (Mouse-ear cress).